Here is a 335-residue protein sequence, read N- to C-terminus: Large ribosomal subunit protein uL3 (335 aa).

The tract at residues M1–A20 is disordered.

It belongs to the universal ribosomal protein uL3 family. In terms of assembly, part of the 50S ribosomal subunit. Forms a cluster with proteins L14 and L24e.

One of the primary rRNA binding proteins, it binds directly near the 3'-end of the 23S rRNA, where it nucleates assembly of the 50S subunit. The chain is Large ribosomal subunit protein uL3 from Methanothrix thermoacetophila (strain DSM 6194 / JCM 14653 / NBRC 101360 / PT) (Methanosaeta thermophila).